Reading from the N-terminus, the 205-residue chain is Lymphotoxin-alpha (205 aa).

Positions 1-34 (MTPPERLFLPRVRGTTLHLLLLGLLLVLLPGAQG) are cleaved as a signal peptide. Threonine 41 carries O-linked (GalNAc...) threonine glycosylation. A THD domain is found at 63–205 (PAAHLIGDPS…STVFFGAFAL (143 aa)). Residue asparagine 96 is glycosylated (N-linked (GlcNAc...) asparagine).

Belongs to the tumor necrosis factor family. In terms of assembly, homotrimer, and heterotrimer of either two LTB and one LTA subunits or (less prevalent) two LTA and one LTB subunits. Interacts with TNFRSF14.

Its subcellular location is the secreted. The protein localises to the membrane. Functionally, cytokine that in its homotrimeric form binds to TNFRSF1A/TNFR1, TNFRSF1B/TNFBR and TNFRSF14/HVEM. In its heterotrimeric form with LTB binds to TNFRSF3/LTBR. Lymphotoxin is produced by lymphocytes and is cytotoxic for a wide range of tumor cells in vitro and in vivo. The chain is Lymphotoxin-alpha (LTA) from Pan troglodytes (Chimpanzee).